We begin with the raw amino-acid sequence, 196 residues long: Large ribosomal subunit protein uL5 (196 aa).

The protein belongs to the universal ribosomal protein uL5 family. As to quaternary structure, part of the 50S ribosomal subunit; part of the 5S rRNA/L5/L18/L25 subcomplex. Contacts the 5S rRNA and the P site tRNA. Forms a bridge to the 30S subunit in the 70S ribosome.

Its function is as follows. This is one of the proteins that bind and probably mediate the attachment of the 5S RNA into the large ribosomal subunit, where it forms part of the central protuberance. In the 70S ribosome it contacts protein S13 of the 30S subunit (bridge B1b), connecting the 2 subunits; this bridge is implicated in subunit movement. Contacts the P site tRNA; the 5S rRNA and some of its associated proteins might help stabilize positioning of ribosome-bound tRNAs. The protein is Large ribosomal subunit protein uL5 of Prosthecochloris aestuarii (strain DSM 271 / SK 413).